We begin with the raw amino-acid sequence, 376 residues long: tRNA-specific 2-thiouridylase MnmA (376 aa).

ATP-binding positions include Gly19–Ser26 and Met45. Positions Asn105 to Asp107 are interaction with target base in tRNA. Cys110 functions as the Nucleophile in the catalytic mechanism. Cys110 and Cys210 are joined by a disulfide. Residue Gly134 participates in ATP binding. Residues Lys160–Gln162 form an interaction with tRNA region. The Cysteine persulfide intermediate role is filled by Cys210. The interval Arg326–Tyr327 is interaction with tRNA.

Belongs to the MnmA/TRMU family.

The protein resides in the cytoplasm. It catalyses the reaction S-sulfanyl-L-cysteinyl-[protein] + uridine(34) in tRNA + AH2 + ATP = 2-thiouridine(34) in tRNA + L-cysteinyl-[protein] + A + AMP + diphosphate + H(+). Catalyzes the 2-thiolation of uridine at the wobble position (U34) of tRNA, leading to the formation of s(2)U34. The protein is tRNA-specific 2-thiouridylase MnmA of Bordetella petrii (strain ATCC BAA-461 / DSM 12804 / CCUG 43448).